The chain runs to 1026 residues: Multidrug resistance protein MdtC (1026 aa).

11 helical membrane passes run 15–35 (ILIA…LPVA), 333–353 (EVEE…FLFL), 360–380 (LIPA…MYLC), 387–407 (LSLM…IVVL), 431–451 (VGFT…PLLL), 463–483 (FAVT…TLTP), 528–548 (LVGV…IAIP), 853–873 (LILI…LYES), 897–917 (LFNA…IGIV), 953–973 (PIMM…LSDG), and 984–1004 (ITIV…TPVV).

Belongs to the resistance-nodulation-cell division (RND) (TC 2.A.6) family. MdtC subfamily. Part of a tripartite efflux system composed of MdtA, MdtB and MdtC. MdtC forms a heteromultimer with MdtB.

The protein resides in the cell inner membrane. This is Multidrug resistance protein MdtC from Salmonella heidelberg (strain SL476).